Reading from the N-terminus, the 284-residue chain is Bifunctional protein FolD (284 aa).

NADP(+) is bound by residues 166–168 and Ile232; that span reads GAS.

This sequence belongs to the tetrahydrofolate dehydrogenase/cyclohydrolase family. As to quaternary structure, homodimer.

It catalyses the reaction (6R)-5,10-methylene-5,6,7,8-tetrahydrofolate + NADP(+) = (6R)-5,10-methenyltetrahydrofolate + NADPH. The enzyme catalyses (6R)-5,10-methenyltetrahydrofolate + H2O = (6R)-10-formyltetrahydrofolate + H(+). It functions in the pathway one-carbon metabolism; tetrahydrofolate interconversion. Functionally, catalyzes the oxidation of 5,10-methylenetetrahydrofolate to 5,10-methenyltetrahydrofolate and then the hydrolysis of 5,10-methenyltetrahydrofolate to 10-formyltetrahydrofolate. The chain is Bifunctional protein FolD from Pseudomonas fluorescens (strain Pf0-1).